A 201-amino-acid polypeptide reads, in one-letter code: MTSSGVLCLLGALSLQVLLLQPPGAQGAPNPDNSHSSSPAPPQTAQHLSQKSLKRETLKPAAHLVGDPSVQDSIHWRANTDHAFLRHGFSLSNNSLLVPTSGLYFVYSQVVFSGASCSEITPTLLYLSHEVLLFSSKYQVHVPLLSAQKSVCSGTQGPWMRSVYQGAVFLLTQGDRLSTYTDGVSHLLQSPSSVFFGAFAL.

An N-terminal signal peptide occupies residues 1–27 (MTSSGVLCLLGALSLQVLLLQPPGAQG). The interval 23–52 (PGAQGAPNPDNSHSSSPAPPQTAQHLSQKS) is disordered. Residues 31–51 (PDNSHSSSPAPPQTAQHLSQK) show a composition bias toward polar residues. The THD domain maps to 60-201 (PAAHLVGDPS…SSVFFGAFAL (142 aa)). N-linked (GlcNAc...) asparagine glycosylation occurs at Asn-93. Cysteines 117 and 152 form a disulfide.

The protein belongs to the tumor necrosis factor family. As to quaternary structure, homotrimer, and heterotrimer of either two LTB and one LTA subunits or (less prevalent) two LTA and one LTB subunits. Interacts with TNFRSF14.

It localises to the secreted. The protein localises to the membrane. Functionally, cytokine that in its homotrimeric form binds to TNFRSF1A/TNFR1, TNFRSF1B/TNFBR and TNFRSF14/HVEM. In its heterotrimeric form with LTB binds to TNFRSF3/LTBR. Lymphotoxin is produced by lymphocytes and is cytotoxic for a wide range of tumor cells in vitro and in vivo. In Notamacropus eugenii (Tammar wallaby), this protein is Lymphotoxin-alpha (LTA).